The chain runs to 266 residues: 3-methyl-2-oxobutanoate hydroxymethyltransferase (266 aa).

Mg(2+) contacts are provided by Asp45 and Asp84. 3-methyl-2-oxobutanoate is bound by residues 45-46, Asp84, and Lys113; that span reads DS. Glu115 is a binding site for Mg(2+). Glu183 (proton acceptor) is an active-site residue.

This sequence belongs to the PanB family. Homodecamer; pentamer of dimers. Mg(2+) is required as a cofactor.

It localises to the cytoplasm. The catalysed reaction is 3-methyl-2-oxobutanoate + (6R)-5,10-methylene-5,6,7,8-tetrahydrofolate + H2O = 2-dehydropantoate + (6S)-5,6,7,8-tetrahydrofolate. It functions in the pathway cofactor biosynthesis; (R)-pantothenate biosynthesis; (R)-pantoate from 3-methyl-2-oxobutanoate: step 1/2. Its function is as follows. Catalyzes the reversible reaction in which hydroxymethyl group from 5,10-methylenetetrahydrofolate is transferred onto alpha-ketoisovalerate to form ketopantoate. This chain is 3-methyl-2-oxobutanoate hydroxymethyltransferase, found in Coxiella burnetii (strain CbuG_Q212) (Coxiella burnetii (strain Q212)).